The primary structure comprises 72 residues: SPbeta prophage-derived uncharacterized protein YoqN (72 aa).

The sequence is that of SPbeta prophage-derived uncharacterized protein YoqN (yoqN) from Bacillus subtilis (strain 168).